The chain runs to 177 residues: Large ribosomal subunit protein uL6 (177 aa).

Lys-44 carries the post-translational modification N6-acetyllysine.

This sequence belongs to the universal ribosomal protein uL6 family. Part of the 50S ribosomal subunit.

Functionally, this protein binds to the 23S rRNA, and is important in its secondary structure. It is located near the subunit interface in the base of the L7/L12 stalk, and near the tRNA binding site of the peptidyltransferase center. This is Large ribosomal subunit protein uL6 from Escherichia fergusonii (strain ATCC 35469 / DSM 13698 / CCUG 18766 / IAM 14443 / JCM 21226 / LMG 7866 / NBRC 102419 / NCTC 12128 / CDC 0568-73).